A 178-amino-acid chain; its full sequence is CDP-archaeol synthase (178 aa).

5 helical membrane passes run L3–V23, F56–Y76, I91–I111, F131–V151, and L152–H172.

It belongs to the CDP-archaeol synthase family. Mg(2+) serves as cofactor.

It localises to the cell membrane. The catalysed reaction is 2,3-bis-O-(geranylgeranyl)-sn-glycerol 1-phosphate + CTP + H(+) = CDP-2,3-bis-O-(geranylgeranyl)-sn-glycerol + diphosphate. The protein operates within membrane lipid metabolism; glycerophospholipid metabolism. Catalyzes the formation of CDP-2,3-bis-(O-geranylgeranyl)-sn-glycerol (CDP-archaeol) from 2,3-bis-(O-geranylgeranyl)-sn-glycerol 1-phosphate (DGGGP) and CTP. This reaction is the third ether-bond-formation step in the biosynthesis of archaeal membrane lipids. The chain is CDP-archaeol synthase from Methanococcus maripaludis (strain DSM 14266 / JCM 13030 / NBRC 101832 / S2 / LL).